The sequence spans 67 residues: Large ribosomal subunit protein bL35 (67 aa).

The protein belongs to the bacterial ribosomal protein bL35 family.

The polypeptide is Large ribosomal subunit protein bL35 (Dehalococcoides mccartyi (strain ATCC BAA-2100 / JCM 16839 / KCTC 5957 / BAV1)).